The primary structure comprises 332 residues: Mitochondrial glycine transporter (332 aa).

3 Solcar repeats span residues 11–94, 121–205, and 235–319; these read SSSY…LRQN, LSNL…LKKR, and TSAS…LIRR. Helical transmembrane passes span 17–42, 69–95, 127–152, 180–203, 239–265, and 294–312; these read FGAG…TRVQ, GTVP…RQNV, LTTG…VRYE, GFGA…EELK, INFG…KTRI, and GLGL…AWTI.

The protein belongs to the mitochondrial carrier (TC 2.A.29) family. SLC25A38 subfamily.

It is found in the mitochondrion inner membrane. It carries out the reaction glycine(in) = glycine(out). Mitochondrial glycine transporter that imports glycine into the mitochondrial matrix. Plays an important role in providing glycine for the first enzymatic step in heme biosynthesis, the condensation of glycine with succinyl-CoA to produce 5-aminolevulinate (ALA) in the mitochondrial matrix. This is Mitochondrial glycine transporter from Botryotinia fuckeliana (strain B05.10) (Noble rot fungus).